Here is a 381-residue protein sequence, read N- to C-terminus: Queuine tRNA-ribosyltransferase (381 aa).

Catalysis depends on aspartate 92, which acts as the Proton acceptor. Substrate-binding positions include 92 to 96 (DSGGF), aspartate 146, glutamine 190, and glycine 217. Residues 248 to 254 (GVGRPED) are RNA binding. Aspartate 267 acts as the Nucleophile in catalysis. Residues 272–276 (TRNAR) are RNA binding; important for wobble base 34 recognition. Positions 305, 307, 310, and 337 each coordinate Zn(2+).

It belongs to the queuine tRNA-ribosyltransferase family. Homodimer. Within each dimer, one monomer is responsible for RNA recognition and catalysis, while the other monomer binds to the replacement base PreQ1. Requires Zn(2+) as cofactor.

The enzyme catalyses 7-aminomethyl-7-carbaguanine + guanosine(34) in tRNA = 7-aminomethyl-7-carbaguanosine(34) in tRNA + guanine. Its pathway is tRNA modification; tRNA-queuosine biosynthesis. In terms of biological role, catalyzes the base-exchange of a guanine (G) residue with the queuine precursor 7-aminomethyl-7-deazaguanine (PreQ1) at position 34 (anticodon wobble position) in tRNAs with GU(N) anticodons (tRNA-Asp, -Asn, -His and -Tyr). Catalysis occurs through a double-displacement mechanism. The nucleophile active site attacks the C1' of nucleotide 34 to detach the guanine base from the RNA, forming a covalent enzyme-RNA intermediate. The proton acceptor active site deprotonates the incoming PreQ1, allowing a nucleophilic attack on the C1' of the ribose to form the product. After dissociation, two additional enzymatic reactions on the tRNA convert PreQ1 to queuine (Q), resulting in the hypermodified nucleoside queuosine (7-(((4,5-cis-dihydroxy-2-cyclopenten-1-yl)amino)methyl)-7-deazaguanosine). This is Queuine tRNA-ribosyltransferase from Xanthomonas axonopodis pv. citri (strain 306).